Reading from the N-terminus, the 176-residue chain is Tubulin polymerization-promoting protein family member 3 (176 aa).

Ala2 is modified (N-acetylalanine).

The protein belongs to the TPPP family.

The protein resides in the cytoplasm. It is found in the cytoskeleton. Regulator of microtubule dynamic that has microtubule bundling activity. Required for embryo implantation; possibly by regulating beta-catenin. Also required for decidualization via regulation of beta-catenin. The protein is Tubulin polymerization-promoting protein family member 3 (Tppp3) of Rattus norvegicus (Rat).